The following is an 84-amino-acid chain: uncharacterized protein (84 aa).

Basic residues-rich tracts occupy residues 1 to 15 (MPPHGHHHHGHHGHH) and 67 to 84 (HHGHHGHHGHHGHHGHFF). Disordered stretches follow at residues 1 to 22 (MPPHGHHHHGHHGHHEHVTYTT) and 64 to 84 (TSHHHGHHGHHGHHGHHGHFF).

This is an uncharacterized protein from Dictyostelium discoideum (Social amoeba).